Reading from the N-terminus, the 360-residue chain is Putative transport protein BU123 (360 aa).

Helical transmembrane passes span I18–F38, F39–L59, A66–V86, G161–G181, L204–I224, G230–F250, S251–W271, I280–I300, and I316–I336.

Belongs to the autoinducer-2 exporter (AI-2E) (TC 2.A.86) family.

Its subcellular location is the cell membrane. This chain is Putative transport protein BU123, found in Buchnera aphidicola subsp. Acyrthosiphon pisum (strain APS) (Acyrthosiphon pisum symbiotic bacterium).